Consider the following 200-residue polypeptide: 3-isopropylmalate dehydratase small subunit (200 aa).

The protein belongs to the LeuD family. LeuD type 1 subfamily. Heterodimer of LeuC and LeuD.

It carries out the reaction (2R,3S)-3-isopropylmalate = (2S)-2-isopropylmalate. It participates in amino-acid biosynthesis; L-leucine biosynthesis; L-leucine from 3-methyl-2-oxobutanoate: step 2/4. In terms of biological role, catalyzes the isomerization between 2-isopropylmalate and 3-isopropylmalate, via the formation of 2-isopropylmaleate. In Vibrio atlanticus (strain LGP32) (Vibrio splendidus (strain Mel32)), this protein is 3-isopropylmalate dehydratase small subunit.